The sequence spans 874 residues: Speckle targeted PIP5K1A-regulated poly(A) polymerase (874 aa).

The Matrin-type zinc-finger motif lies at 16-46; the sequence is FRCCLCHVTTANRPSLDAHLGGRKHRHLVEL. Residues 56–128 enclose the RRM domain; that stretch reads RSVFVSGFPR…HRLRVRPREQ (73 aa). The disordered stretch occupies residues 113–146; that stretch reads QHSLGGHRLRVRPREQKEFQSPASKSPKGAAPDS. Residue serine 205 coordinates ATP. Aspartate 216 and aspartate 218 together coordinate Mg(2+). UTP is bound by residues aspartate 216 and aspartate 218. The tract at residues 252-334 is disordered; the sequence is QALACTPASP…ELAETPKEEK (83 aa). Pro residues predominate over residues 259–269; it reads ASPPDSQPPAS. The segment covering 280 to 291 has biased composition (polar residues); that stretch reads TPSSSLAPQTPD. Asparagine 392 is a binding site for ATP. UTP-binding residues include asparagine 392, arginine 414, tyrosine 432, and histidine 549. Positions 491–549 constitute a PAP-associated domain; the sequence is LSSLLAQFFSCVSCWDLRGSLLSLREGQALPVAGGLPSNLWEGLRLGPLNLQDPFDLSH. The interval 598-874 is KA1; binds the bulging loops of U6 snRNA but is dispensable for terminal uridylyltransferase activity; that stretch reads SSPSSLLSAT…FLPQAIRHLK (277 aa). 2 disordered regions span residues 638-662 and 705-761; these read ATKRTRSEGGGTGESSQGGTSKRLK and MQSP…ASLP. Serine 750 bears the Phosphoserine mark.

The protein belongs to the DNA polymerase type-B-like family. In terms of assembly, associates with the cleavage and polyadenylation specificity factor (CPSF) complex. Interacts with CPSF1 and CPSF3; the interaction is direct. Interacts with PIP5K1A. Requires Mg(2+) as cofactor. It depends on Mn(2+) as a cofactor. In terms of processing, phosphorylated by CK1 in the proline-rich (Pro-rich) region. In terms of tissue distribution, widely expressed.

Its subcellular location is the nucleus. The protein resides in the nucleolus. It localises to the nucleus speckle. It catalyses the reaction RNA(n) + UTP = RNA(n)-3'-uridine ribonucleotide + diphosphate. The enzyme catalyses RNA(n) + ATP = RNA(n)-3'-adenine ribonucleotide + diphosphate. With respect to regulation, adenylyltransferase activity is specifically phosphatidylinositol 4,5-bisphosphate (PtdIns(4,5)P2). Functionally, poly(A) polymerase that creates the 3'-poly(A) tail of specific pre-mRNAs. Localizes to nuclear speckles together with PIP5K1A and mediates polyadenylation of a select set of mRNAs, such as HMOX1. In addition to polyadenylation, it is also required for the 3'-end cleavage of pre-mRNAs: binds to the 3'UTR of targeted pre-mRNAs and promotes the recruitment and assembly of the CPSF complex on the 3'UTR of pre-mRNAs. In addition to adenylyltransferase activity, also has uridylyltransferase activity. However, the ATP ratio is higher than UTP in cells, suggesting that it functions primarily as a poly(A) polymerase. Acts as a specific terminal uridylyltransferase for U6 snRNA in vitro: responsible for a controlled elongation reaction that results in the restoration of the four 3'-terminal UMP-residues found in newly transcribed U6 snRNA. Not involved in replication-dependent histone mRNA degradation. The chain is Speckle targeted PIP5K1A-regulated poly(A) polymerase (TUT1) from Homo sapiens (Human).